Reading from the N-terminus, the 194-residue chain is Amidophosphoribosyltransferase (194 aa).

A propeptide spanning residues 1-11 (MPHEPKGLNEE) is cleaved from the precursor. C12 acts as the Nucleophile in catalysis. In terms of domain architecture, Glutamine amidotransferase type-2 spans 12-194 (CGVFGVWGNP…PHGFRPMVVG (183 aa)).

The protein in the C-terminal section; belongs to the purine/pyrimidine phosphoribosyltransferase family.

It catalyses the reaction 5-phospho-beta-D-ribosylamine + L-glutamate + diphosphate = 5-phospho-alpha-D-ribose 1-diphosphate + L-glutamine + H2O. Its pathway is purine metabolism; IMP biosynthesis via de novo pathway; N(1)-(5-phospho-D-ribosyl)glycinamide from 5-phospho-alpha-D-ribose 1-diphosphate: step 1/2. Its function is as follows. Catalyzes the formation of phosphoribosylamine from phosphoribosylpyrophosphate (PRPP) and glutamine. This is Amidophosphoribosyltransferase from Lacticaseibacillus casei (Lactobacillus casei).